The sequence spans 466 residues: Eukaryotic translation initiation factor 3 subunit M (466 aa).

Positions 40–62 (EISPLLEPLRQQEQSDAEPDRKQ) are disordered. Residues 211 to 378 (AQTHILQALQ…SEFLVHRATY (168 aa)) enclose the PCI domain. Positions 424–466 (AAEEAAQGKSNDKGNKSGDRRQRHGNNQQSQQQQQPQEVAAAE) are disordered. The segment covering 433-443 (SNDKGNKSGDR) has biased composition (basic and acidic residues). The segment covering 451-460 (QQSQQQQQPQ) has biased composition (low complexity).

This sequence belongs to the eIF-3 subunit M family. Component of the eukaryotic translation initiation factor 3 (eIF-3) complex.

It localises to the cytoplasm. Component of the eukaryotic translation initiation factor 3 (eIF-3) complex, which is involved in protein synthesis of a specialized repertoire of mRNAs and, together with other initiation factors, stimulates binding of mRNA and methionyl-tRNAi to the 40S ribosome. The eIF-3 complex specifically targets and initiates translation of a subset of mRNAs involved in cell proliferation. This is Eukaryotic translation initiation factor 3 subunit M from Aspergillus oryzae (strain ATCC 42149 / RIB 40) (Yellow koji mold).